The sequence spans 200 residues: Large ribosomal subunit protein uL4 (200 aa).

A disordered region spans residues 42–65 (TRAHKSRADVSGGGKKPFRQKGTG).

The protein belongs to the universal ribosomal protein uL4 family. In terms of assembly, part of the 50S ribosomal subunit.

Its function is as follows. One of the primary rRNA binding proteins, this protein initially binds near the 5'-end of the 23S rRNA. It is important during the early stages of 50S assembly. It makes multiple contacts with different domains of the 23S rRNA in the assembled 50S subunit and ribosome. Functionally, forms part of the polypeptide exit tunnel. The sequence is that of Large ribosomal subunit protein uL4 from Acinetobacter baumannii (strain AB307-0294).